The primary structure comprises 362 residues: Methionine import ATP-binding protein MetN (362 aa).

The 240-residue stretch at 2–241 (IHIENLSKTY…PRHEVTRAMV (240 aa)) folds into the ABC transporter domain. Residue 38-45 (GPSGAGKS) participates in ATP binding.

Belongs to the ABC transporter superfamily. Methionine importer (TC 3.A.1.24) family. In terms of assembly, the complex is composed of two ATP-binding proteins (MetN), two transmembrane proteins (MetI) and a solute-binding protein (MetQ).

The protein resides in the cell inner membrane. The enzyme catalyses L-methionine(out) + ATP + H2O = L-methionine(in) + ADP + phosphate + H(+). It carries out the reaction D-methionine(out) + ATP + H2O = D-methionine(in) + ADP + phosphate + H(+). Its function is as follows. Part of the ABC transporter complex MetNIQ involved in methionine import. Responsible for energy coupling to the transport system. This chain is Methionine import ATP-binding protein MetN, found in Bordetella bronchiseptica (strain ATCC BAA-588 / NCTC 13252 / RB50) (Alcaligenes bronchisepticus).